The sequence spans 112 residues: UPF0342 protein STER_0693 (112 aa).

Belongs to the UPF0342 family.

The chain is UPF0342 protein STER_0693 from Streptococcus thermophilus (strain ATCC BAA-491 / LMD-9).